Consider the following 128-residue polypeptide: Small ribosomal subunit protein eS8 (128 aa).

The protein belongs to the eukaryotic ribosomal protein eS8 family. In terms of assembly, part of the 30S ribosomal subunit.

In Methanococcus maripaludis (strain C7 / ATCC BAA-1331), this protein is Small ribosomal subunit protein eS8.